Reading from the N-terminus, the 260-residue chain is Large ribosomal subunit protein uL30 (260 aa).

Methionine 1 carries the N-acetylmethionine modification. Tandem repeats lie at residues 7-18 (KKKKVAAALGTL), 19-30 (KKKKVPAVPETL), 31-42 (KKKRRNFAELKV), 43-54 (KRLRKKFALKTL), and 55-66 (RKARRKLIYEKA). The interval 7–66 (KKKKVAAALGTLKKKKVPAVPETLKKKRRNFAELKVKRLRKKFALKTLRKARRKLIYEKA) is 5 X 12 AA tandem repeats. Threonine 29 bears the Phosphothreonine mark. Lysine 136 is subject to N6-acetyllysine. Lysine 139 is modified (N6-succinyllysine). Tyrosine 151 is subject to Phosphotyrosine.

This sequence belongs to the universal ribosomal protein uL30 family. In terms of assembly, component of the large ribosomal subunit. Homodimer. Interacts with DHX33.

The protein localises to the cytoplasm. Its function is as follows. Component of the large ribosomal subunit. The ribosome is a large ribonucleoprotein complex responsible for the synthesis of proteins in the cell. Binds to G-rich structures in 28S rRNA and in mRNAs. Plays a regulatory role in the translation apparatus; inhibits cell-free translation of mRNAs. This chain is Large ribosomal subunit protein uL30 (Rpl7), found in Rattus norvegicus (Rat).